Reading from the N-terminus, the 98-residue chain is NADH-ubiquinone oxidoreductase chain 4L (98 aa).

The next 3 helical transmembrane spans lie at 2-22, 29-49, and 61-81; these read PSIS…MLMF, SLLC…LIIL, and ILLL…LVTV.

It belongs to the complex I subunit 4L family. In terms of assembly, core subunit of respiratory chain NADH dehydrogenase (Complex I) which is composed of 45 different subunits.

It is found in the mitochondrion inner membrane. The catalysed reaction is a ubiquinone + NADH + 5 H(+)(in) = a ubiquinol + NAD(+) + 4 H(+)(out). In terms of biological role, core subunit of the mitochondrial membrane respiratory chain NADH dehydrogenase (Complex I) which catalyzes electron transfer from NADH through the respiratory chain, using ubiquinone as an electron acceptor. Part of the enzyme membrane arm which is embedded in the lipid bilayer and involved in proton translocation. This chain is NADH-ubiquinone oxidoreductase chain 4L (MT-ND4L), found in Microcebus mamiratra (Claire's mouse lemur).